Consider the following 176-residue polypeptide: ATP-dependent protease subunit HslV (176 aa).

Threonine 2 is a catalytic residue. Na(+) is bound by residues glycine 157, cysteine 160, and threonine 163.

It belongs to the peptidase T1B family. HslV subfamily. A double ring-shaped homohexamer of HslV is capped on each side by a ring-shaped HslU homohexamer. The assembly of the HslU/HslV complex is dependent on binding of ATP.

It is found in the cytoplasm. The enzyme catalyses ATP-dependent cleavage of peptide bonds with broad specificity.. Allosterically activated by HslU binding. In terms of biological role, protease subunit of a proteasome-like degradation complex believed to be a general protein degrading machinery. The polypeptide is ATP-dependent protease subunit HslV (Escherichia coli O139:H28 (strain E24377A / ETEC)).